Consider the following 130-residue polypeptide: Small ribosomal subunit protein uS9 (130 aa).

Residues 110 to 130 (AKERKKYGRKGARARFQFSKR) are disordered. The segment covering 111-130 (KERKKYGRKGARARFQFSKR) has biased composition (basic residues).

Belongs to the universal ribosomal protein uS9 family.

The protein is Small ribosomal subunit protein uS9 of Syntrophotalea carbinolica (strain DSM 2380 / NBRC 103641 / GraBd1) (Pelobacter carbinolicus).